Consider the following 208-residue polypeptide: Inducible T-cell costimulator (208 aa).

A signal peptide spans 1-19; it reads MKSDLWYFLLFCFQVEALT. At 20–140 the chain is on the extracellular side; the sequence is GEINDSTKSE…YESQTCCQLK (121 aa). N-linked (GlcNAc...) asparagine glycosylation is present at N23. The Ig-like V-type domain occupies 30 to 132; sequence MFTFHDGGVQ…ISREYLNVYE (103 aa). 2 cysteine pairs are disulfide-bonded: C42-C108 and C63-C82. A glycan (N-linked (GlcNAc...) asparagine) is linked at N122. A helical transmembrane segment spans residues 141–161; it reads FWLPIGCAAFVVVYIFGCIFL. Residues 162–208 are Cytoplasmic-facing; the sequence is CWLTKKKYRSSVHDPNSEYMFMAAVNTAKKPGLTGVTHNLELCGTQA.

As to quaternary structure, homodimer; disulfide-linked. Interacts with ICOSLG. Interacts with PIK3R1. Interacts with TBK1; this interaction is critical for the maturation of T follicular regulatory cells. N-glycosylated.

The protein resides in the cell membrane. Functionally, stimulatory receptor expressed in activated or antigen-experienced T-cells that plays an important role in the immune response. Upon binding to its ligand ICOSL expressed on antigen presenting cells (APCs), delivers costimulatory signals that enhances all basic T-cell responses to a foreign antigen, namely proliferation, secretion of lymphokines including IL10, up-regulation of molecules that mediate cell-cell interaction, and effective help for antibody secretion by B-cells. Also acts as a costimulatory receptor critical for the differentiation of T follicular regulatory cells upon immune challenges such as viral infection. Mechanistically, potentiates TCR-induced calcium flux by augmenting PLCG1 activation and actin remodeling. In addition, activates PI3K signaling pathways independently of calcium flux. Essential both for efficient interaction between T and B-cells and for normal antibody responses to T-cell dependent antigens. Prevents the apoptosis of pre-activated T-cells. Plays a critical role in CD40-mediated class switching of immunoglobin isotypes. This chain is Inducible T-cell costimulator (ICOS), found in Canis lupus familiaris (Dog).